Here is a 303-residue protein sequence, read N- to C-terminus: Flavin-dependent thymidylate synthase (303 aa).

The disordered stretch occupies residues 1-21 (MALTSEQRAEIEAQRSEPQLT). Positions 43-256 (GFLRVVDYMG…PATAAAFEEY (214 aa)) constitute a ThyX domain. FAD contacts are provided by residues Thr89, 112-114 (RHR), and Glu120. DUMP is bound by residues 109–112 (QWIR), 120–124 (EYSAR), and Arg195. Residues 112–122 (RHRMASVNEYS) carry the ThyX motif motif. FAD-binding positions include 211-213 (DLH) and His217. Arg222 contacts dUMP. The active-site Involved in ionization of N3 of dUMP, leading to its activation is the Arg222.

It belongs to the thymidylate synthase ThyX family. As to quaternary structure, homotetramer. The cofactor is FAD.

It carries out the reaction dUMP + (6R)-5,10-methylene-5,6,7,8-tetrahydrofolate + NADPH + H(+) = dTMP + (6S)-5,6,7,8-tetrahydrofolate + NADP(+). It participates in pyrimidine metabolism; dTTP biosynthesis. In terms of biological role, catalyzes the reductive methylation of 2'-deoxyuridine-5'-monophosphate (dUMP) to 2'-deoxythymidine-5'-monophosphate (dTMP) while utilizing 5,10-methylenetetrahydrofolate (mTHF) as the methyl donor, and NADPH and FADH(2) as the reductant. This is Flavin-dependent thymidylate synthase from Gluconobacter oxydans (strain 621H) (Gluconobacter suboxydans).